Reading from the N-terminus, the 156-residue chain is Large ribosomal subunit protein uL15 (156 aa).

The segment covering 1-13 (MKLNEIKDNEGAT) has biased composition (basic and acidic residues). Residues 1 to 39 (MKLNEIKDNEGATKNRKRLGRGIGSGSGKTAGRGVKGQK) form a disordered region. Over residues 21 to 35 (RGIGSGSGKTAGRGV) the composition is skewed to gly residues.

Belongs to the universal ribosomal protein uL15 family. In terms of assembly, part of the 50S ribosomal subunit.

Its function is as follows. Binds to the 23S rRNA. This is Large ribosomal subunit protein uL15 from Rhizobium meliloti (strain 1021) (Ensifer meliloti).